Consider the following 972-residue polypeptide: UPF0746 protein DDB_G0280785 (972 aa).

A compositionally biased stretch (basic and acidic residues) spans Met1–Asp19. Positions Met1–Asn30 are disordered. Residues Ser44 to Phe78 form the SAP domain.

Belongs to the UPF0746 family.

The chain is UPF0746 protein DDB_G0280785 from Dictyostelium discoideum (Social amoeba).